Consider the following 145-residue polypeptide: Small ribosomal subunit protein bS6 (145 aa).

The protein belongs to the bacterial ribosomal protein bS6 family.

Binds together with bS18 to 16S ribosomal RNA. This Mycoplasmopsis agalactiae (strain NCTC 10123 / CIP 59.7 / PG2) (Mycoplasma agalactiae) protein is Small ribosomal subunit protein bS6.